A 1273-amino-acid polypeptide reads, in one-letter code: Kinesin-like protein KIN-14A (1273 aa).

A disordered region spans residues 1-52 (MADQRSKTNRWNWEVSGFEPRKSSSNASFAESTGHRTTGPLLRRNSISTPSL). The stretch at 59-89 (ASKVNGLKEKVKLAKEDYLELRQEATDLQEY) forms a coiled coil. One can recognise a Kinesin motor domain in the interval 142 to 456 (NIKVFCRARP…LNYAARARNT (315 aa)). 223–230 (GQTNAGKT) contributes to the ATP binding site. 3 coiled-coil regions span residues 466-511 (IKKW…CVLL), 559-595 (QLDQ…AVRS), and 627-657 (TKKL…RLTE). Disordered stretches follow at residues 827–847 (KPNT…RSPV) and 1136–1157 (QEDT…SISS). Residues 830–846 (TGRSKSTSRGSSPGRSP) are compositionally biased toward low complexity.

The protein belongs to the TRAFAC class myosin-kinesin ATPase superfamily. Kinesin family. KIN-14 subfamily. Homodimer and heterodimer with KCA2. Interacts with CDKA-1. Interacts with AL1, a geminivirus (TGMV) protein essential for viral replication. Interacts with LUE1/KSS. In terms of processing, part of the phosphorylation is not CDK-dependent. Widely expressed.

It is found in the nucleus. The protein localises to the cytoplasm. Its subcellular location is the cytoskeleton. It localises to the spindle. The protein resides in the chromosome. It is found in the cell membrane. The protein localises to the phragmoplast. In terms of biological role, kinesin-like protein required for chloroplast movements and anchor to the plasma membrane. Mediates chloroplast movement via chloroplast actin (cp-actin) filaments. Required for the chloroplast avoidance response under high intensity blue light. Mediates redundantly with CHUP1 the nuclear avoidance response under high intensity blue light. May act as a mitotic kinesin. Probably involved in division plane determination. This is Kinesin-like protein KIN-14A from Arabidopsis thaliana (Mouse-ear cress).